Consider the following 475-residue polypeptide: UDP-N-acetylmuramate--L-alanine ligase (475 aa).

Residue 118-124 (GTHGKTT) participates in ATP binding.

The protein belongs to the MurCDEF family.

It localises to the cytoplasm. It catalyses the reaction UDP-N-acetyl-alpha-D-muramate + L-alanine + ATP = UDP-N-acetyl-alpha-D-muramoyl-L-alanine + ADP + phosphate + H(+). The protein operates within cell wall biogenesis; peptidoglycan biosynthesis. Functionally, cell wall formation. The sequence is that of UDP-N-acetylmuramate--L-alanine ligase from Paracoccus denitrificans (strain Pd 1222).